A 1090-amino-acid polypeptide reads, in one-letter code: Neurofilament heavy polypeptide (1090 aa).

The interval 2-98 (MSFGSADALL…AVAARSEKEQ (97 aa)) is head. A phosphoserine mark is found at serine 74 and serine 122. Residues 95 to 411 (EKEQLQALND…KLLEGEECRI (317 aa)) form the IF rod domain. A coil 1A region spans residues 99–130 (LQALNDRFAGYIDKVRQLEAHNRSLEGEAAAL). The tract at residues 131–143 (RQQQAGRAAMGEL) is linker 1. Residues 144 to 242 (YEREVREMRG…QEEVGELLGQ (99 aa)) are coil 1B. Residues 243-264 (IQGCGAAQAQAQAEARDALKCD) are linker 12. Positions 265 to 286 (VTSALREIRAQLEGHAVQSTLQ) are coil 2A. The tract at residues 287 to 290 (SEEW) is linker 2. The coil 2B stretch occupies residues 291–411 (FRVRLDRLSE…KLLEGEECRI (121 aa)). Phosphoserine occurs at positions 345, 416, and 419. The tail stretch occupies residues 412 to 1090 (GFGPSPFSLT…TEDKATKGEK (679 aa)). Residues 456–1090 (EGQTEEIRVT…TEDKATKGEK (635 aa)) are disordered. Residues 468 to 495 (VTEEEDKEAQGQEGEEAEEGEEKEEEEG) show a composition bias toward acidic residues. Positions 496–506 (AAATSPPAEEA) are enriched in low complexity. Phosphoserine occurs at positions 508, 523, 529, 535, 541, 547, 553, 559, 565, 571, 577, 583, 589, 595, 601, 607, 613, 619, 625, 631, 637, 643, 649, 655, 661, 667, 673, 679, 685, 691, 697, 703, 709, 715, 721, 727, 733, 739, 745, 751, 757, 763, and 769. Over residues 508–579 (SPEKETKSRV…KSPAEAKSPA (72 aa)) the composition is skewed to basic and acidic residues. Repeat copies occupy residues 522–527 (KSPGEA), 528–533 (KSPGEA), 534–539 (KSPAEA), 540–545 (KSPGEA), 546–551 (KSPGEA), 552–557 (KSPGEA), 558–563 (KSPAEP), 564–569 (KSPAEP), 570–575 (KSPAEA), 576–581 (KSPAEP), 582–587 (KSPATV), 588–593 (KSPGEA), 594–599 (KSPSEA), 600–605 (KSPAEA), 606–611 (KSPAEA), 612–617 (KSPAEA), 618–623 (KSPAEA), 624–629 (KSPAEA), 630–635 (KSPAEA), 636–641 (KSPATV), 642–647 (KSPGEA), 648–653 (KSPSEA), 654–659 (KSPAEA), 660–665 (KSPAEA), 666–671 (KSPAEA), 672–677 (KSPAEV), 678–683 (KSPGEA), 684–689 (KSPAEP), 690–695 (KSPAEA), 696–701 (KSPAEV), 702–707 (KSPAEA), 708–713 (KSPAEV), 714–719 (KSPGEA), 720–725 (KSPAAV), 726–731 (KSPAEA), 732–737 (KSPAAV), 738–743 (KSPGEA), 744–749 (KSPGEA), 750–755 (KSPAEA), 756–761 (KSPAEA), 762–767 (KSPIEV), and 768–773 (KSPEKA). The segment at 522 to 892 (KSPGEAKSPG…KEEVKSPVKE (371 aa)) is 52 X 6 AA approximate tandem repeats of K-S-P-[AGISV]-[EATK]-[APVQ]. Basic and acidic residues predominate over residues 595 to 633 (SPSEAKSPAEAKSPAEAKSPAEAKSPAEAKSPAEAKSPA). Residues 649–717 (SPSEAKSPAE…KSPAEVKSPG (69 aa)) are compositionally biased toward basic and acidic residues. Residues 745–781 (SPGEAKSPAEAKSPAEAKSPIEVKSPEKAKTPVKEGA) are compositionally biased toward basic and acidic residues. Residues 774 to 779 (KTPVKE) form a 43; approximate repeat. 6 consecutive repeat copies span residues 782–787 (KSPAEA), 788–793 (KSPEKA), 794–799 (KSPVKE), 808–813 (KSPEKA), 814–819 (KSPVKE), and 833–838 (KSPEAQ). Serine 783, serine 789, serine 795, serine 809, serine 815, and serine 834 each carry phosphoserine. The span at 788-834 (KSPEKAKSPVKEDIKPPAEAKSPEKAKSPVKEGAKPPEKAKPLDVKS) shows a compositional bias: basic and acidic residues. Threonine 839 is modified (phosphothreonine). Composition is skewed to basic and acidic residues over residues 843–964 (EEAK…KAVA) and 974–1090 (GVKE…KGEK). 3 repeat units span residues 858–863 (KSPAKE), 866–871 (KSPEKE), and 887–892 (KSPVKE). A phosphoserine mark is found at serine 859, serine 867, serine 888, and serine 947.

The protein belongs to the intermediate filament family. As to quaternary structure, forms heterodimers with NEFL; which can further hetero-oligomerize (in vitro). Forms heterodimers with INA (in vitro). There are a number of repeats of the tripeptide K-S-P, NFH is phosphorylated on a number of the serines in this motif. It is thought that phosphorylation of NFH results in the formation of interfilament cross bridges that are important in the maintenance of axonal caliber. In terms of processing, phosphorylation seems to play a major role in the functioning of the larger neurofilament polypeptides (NF-M and NF-H), the levels of phosphorylation being altered developmentally and coincidentally with a change in the neurofilament function. Post-translationally, phosphorylated in the head and rod regions by the PKC kinase PKN1, leading to the inhibition of polymerization. In terms of tissue distribution, expressed in the sciatic nerve (at protein level).

It is found in the cytoplasm. The protein resides in the cytoskeleton. It localises to the cell projection. Its subcellular location is the axon. Neurofilaments usually contain three intermediate filament proteins: NEFL, NEFM, and NEFH which are involved in the maintenance of neuronal caliber. NEFH has an important function in mature axons that is not subserved by the two smaller NF proteins. May additionally cooperate with the neuronal intermediate filament proteins PRPH and INA to form neuronal filamentous networks. In Mus musculus (Mouse), this protein is Neurofilament heavy polypeptide (Nefh).